A 288-amino-acid chain; its full sequence is NAD kinase (288 aa).

Aspartate 68 (proton acceptor) is an active-site residue. Residues 68 to 69 (DG), 142 to 143 (ND), arginine 153, aspartate 172, and glutamine 242 contribute to the NAD(+) site.

The protein belongs to the NAD kinase family. The cofactor is a divalent metal cation.

The protein localises to the cytoplasm. The enzyme catalyses NAD(+) + ATP = ADP + NADP(+) + H(+). Functionally, involved in the regulation of the intracellular balance of NAD and NADP, and is a key enzyme in the biosynthesis of NADP. Catalyzes specifically the phosphorylation on 2'-hydroxyl of the adenosine moiety of NAD to yield NADP. This chain is NAD kinase, found in Desulforamulus reducens (strain ATCC BAA-1160 / DSM 100696 / MI-1) (Desulfotomaculum reducens).